Consider the following 308-residue polypeptide: 1D-myo-inositol 2-acetamido-2-deoxy-alpha-D-glucopyranoside deacetylase (308 aa).

Residues His-37, Asp-40, and His-171 each contribute to the Zn(2+) site.

This sequence belongs to the MshB deacetylase family. The cofactor is Zn(2+).

It catalyses the reaction 1D-myo-inositol 2-acetamido-2-deoxy-alpha-D-glucopyranoside + H2O = 1D-myo-inositol 2-amino-2-deoxy-alpha-D-glucopyranoside + acetate. Functionally, catalyzes the deacetylation of 1D-myo-inositol 2-acetamido-2-deoxy-alpha-D-glucopyranoside (GlcNAc-Ins) in the mycothiol biosynthesis pathway. This chain is 1D-myo-inositol 2-acetamido-2-deoxy-alpha-D-glucopyranoside deacetylase, found in Mycobacterium sp. (strain JLS).